Reading from the N-terminus, the 297-residue chain is Malonyl-[acyl-carrier protein] O-methyltransferase (297 aa).

It belongs to the methyltransferase superfamily.

It catalyses the reaction malonyl-[ACP] + S-adenosyl-L-methionine = malonyl-[ACP] methyl ester + S-adenosyl-L-homocysteine. Its pathway is cofactor biosynthesis; biotin biosynthesis. Functionally, converts the free carboxyl group of a malonyl-thioester to its methyl ester by transfer of a methyl group from S-adenosyl-L-methionine (SAM). It allows to synthesize pimeloyl-ACP via the fatty acid synthetic pathway. This is Malonyl-[acyl-carrier protein] O-methyltransferase from Laribacter hongkongensis (strain HLHK9).